The sequence spans 687 residues: Protein 4.2 (687 aa).

G2 carries N-myristoyl glycine lipidation. The interval 31 to 39 is band 3 binding; that stretch reads LFVRRGQPF. At S247 the chain carries Phosphoserine.

Belongs to the transglutaminase superfamily. Transglutaminase family. In terms of assembly, component of the ankyrin-1 complex in the erythrocyte, composed of ANK1, RHCE, RHAG, SLC4A1, EPB42, GYPA, GYPB and AQP1. Interacts with SLC4A1 (via the cytoplasmic domain); this interaction is mediated by the SLC4A1 Band 3-I dimer. Interacts with ANK1 (via ANK 1-13 repeats). Interacts with AQP1 (via the C-terminal).

It is found in the cell membrane. The protein resides in the cytoplasm. The protein localises to the cytoskeleton. In terms of biological role, component of the ankyrin-1 complex, a multiprotein complex involved in the stability and shape of the erythrocyte membrane. The chain is Protein 4.2 from Bos taurus (Bovine).